A 206-amino-acid polypeptide reads, in one-letter code: LexA repressor (206 aa).

Residues arginine 28–lysine 48 constitute a DNA-binding region (H-T-H motif). Residues serine 123 and lysine 160 each act as for autocatalytic cleavage activity in the active site.

Belongs to the peptidase S24 family. In terms of assembly, homodimer.

It catalyses the reaction Hydrolysis of Ala-|-Gly bond in repressor LexA.. In terms of biological role, represses a number of genes involved in the response to DNA damage (SOS response), including recA and lexA. In the presence of single-stranded DNA, RecA interacts with LexA causing an autocatalytic cleavage which disrupts the DNA-binding part of LexA, leading to derepression of the SOS regulon and eventually DNA repair. The chain is LexA repressor from Vibrio atlanticus (strain LGP32) (Vibrio splendidus (strain Mel32)).